The sequence spans 39 residues: Photosystem II reaction center protein L (39 aa).

A helical membrane pass occupies residues 18 to 38; the sequence is SLYLGLLLVAVLGILFSSYFF.

Belongs to the PsbL family. PSII is composed of 1 copy each of membrane proteins PsbA, PsbB, PsbC, PsbD, PsbE, PsbF, PsbH, PsbI, PsbJ, PsbK, PsbL, PsbM, PsbT, PsbX, PsbY, PsbZ, Psb30/Ycf12, peripheral proteins PsbO, CyanoQ (PsbQ), PsbU, PsbV and a large number of cofactors. It forms dimeric complexes.

The protein resides in the cellular thylakoid membrane. Functionally, one of the components of the core complex of photosystem II (PSII). PSII is a light-driven water:plastoquinone oxidoreductase that uses light energy to abstract electrons from H(2)O, generating O(2) and a proton gradient subsequently used for ATP formation. It consists of a core antenna complex that captures photons, and an electron transfer chain that converts photonic excitation into a charge separation. This subunit is found at the monomer-monomer interface and is required for correct PSII assembly and/or dimerization. This is Photosystem II reaction center protein L from Rippkaea orientalis (strain PCC 8801 / RF-1) (Cyanothece sp. (strain PCC 8801)).